The sequence spans 388 residues: Na(+)/H(+) antiporter NhaA (388 aa).

The Cytoplasmic portion of the chain corresponds to 1-11; that stretch reads MKHLHRFFSSD. Residues 12–31 form a helical membrane-spanning segment; the sequence is ASGGIILIIAAILAMMMANS. At 32 to 58 the chain is on the periplasmic side; that stretch reads GATSGWYHDFLETPVQLRVGSLEINKN. Residues 59–80 traverse the membrane as a helical segment; it reads MLLWINDALMAVFFLLVGLEVK. At 81 to 96 the chain is on the cytoplasmic side; the sequence is RELMQGSLASLRQAAF. Residues 97–116 traverse the membrane as a helical segment; it reads PVIAAIGGMIVPALLYLAFN. Residues 117–122 are Periplasmic-facing; it reads YADPIT. The helical transmembrane segment at 123–130 threads the bilayer; that stretch reads REGWAIPA. Residues 131 to 154 are Cytoplasmic-facing; that stretch reads ATDIAFALGVLALLGSRVPLALKI. Residues 155–176 form a helical membrane-spanning segment; the sequence is FLMALAIIDDLGAIIIIALFYT. At 177–180 the chain is on the periplasmic side; the sequence is NDLS. The chain crosses the membrane as a helical span at residues 181–200; that stretch reads MASLGVAAVAIAVLAVLNLC. The Cytoplasmic portion of the chain corresponds to 201–204; it reads GVRR. Residues 205–222 traverse the membrane as a helical segment; it reads TGVYILVGVVLWTAVLKS. A topological domain (periplasmic) is located at residue glycine 223. A helical transmembrane segment spans residues 224-236; it reads VHATLAGVIVGFF. The Cytoplasmic portion of the chain corresponds to 237–253; that stretch reads IPLKEKHGRSTAKRLEH. A helical membrane pass occupies residues 254–272; that stretch reads VLHPWVAYLILPLFAFANA. Residues 273–286 are Periplasmic-facing; sequence GVSLQGVTLDGLTS. The chain crosses the membrane as a helical span at residues 287 to 310; it reads ILPLGIIAGLLIGKPLGISLFCWL. Over 311 to 339 the chain is Cytoplasmic; the sequence is ALRLKLAHLPEGTTYQQIMAVGILCGIGF. The helical transmembrane segment at 340-350 threads the bilayer; that stretch reads TMSIFIASLAF. The Periplasmic segment spans residues 351–357; that stretch reads GSVDPEL. Residues 358–380 traverse the membrane as a helical segment; the sequence is INWAKLGILVGSISSAVIGYSWL. At 381–388 the chain is on the cytoplasmic side; sequence RVRLRPSV.

This sequence belongs to the NhaA Na(+)/H(+) (TC 2.A.33) antiporter family.

The protein resides in the cell inner membrane. It carries out the reaction Na(+)(in) + 2 H(+)(out) = Na(+)(out) + 2 H(+)(in). Na(+)/H(+) antiporter that extrudes sodium in exchange for external protons. This chain is Na(+)/H(+) antiporter NhaA, found in Shigella dysenteriae serotype 1 (strain Sd197).